Here is a 243-residue protein sequence, read N- to C-terminus: MSKKLKPFEILEDSCASVCIWLNGEPTAISNRAENLWNKAKYRVATDGAVNEILKRKSFVEWPHIICGDFDSINKQIDTKNAKVVHLPDQDYTDLSKSVQWCLEQKTLTSWEFENIVVLGGLNGRFDHTMSTLSSLIRFVDSQTPVIVLDSRNLVLAVPTGDSNLDVNLEMTTKMCGIIPIVQKETIVSSIGLKYEMENLALEFGKLISTSNEVTTSQVFLKSSSSLIFSIELENWVYKLDSL.

This sequence belongs to the thiamine pyrophosphokinase family.

The enzyme catalyses thiamine + ATP = thiamine diphosphate + AMP + H(+). Its pathway is cofactor biosynthesis; thiamine diphosphate biosynthesis; thiamine diphosphate from thiamine: step 1/1. Catalyzes the phosphorylation of thiamine to thiamine pyrophosphate. Functions cell non-autonomously. This chain is Thiamin pyrophosphokinase 1, found in Caenorhabditis elegans.